Consider the following 351-residue polypeptide: Neutral protease 2 homolog MGG_10927 (351 aa).

Residues 1 to 16 form the signal peptide; the sequence is MKFSIGVSLLATLAGA. Residues 17–177 constitute a propeptide that is removed on maturation; it reads VNVDMAKRDT…AAFLAKRTIV (161 aa). Disulfide bonds link Cys181-Cys253 and Cys260-Cys278. Residue His303 coordinates Zn(2+). The active site involves Glu304. His307 contributes to the Zn(2+) binding site.

Belongs to the peptidase M35 family. It depends on Zn(2+) as a cofactor.

Its subcellular location is the secreted. The enzyme catalyses Preferential cleavage of bonds with hydrophobic residues in P1'. Also 3-Asn-|-Gln-4 and 8-Gly-|-Ser-9 bonds in insulin B chain.. In terms of biological role, secreted metalloproteinase that allows assimilation of proteinaceous substrates. Shows high activities on basic nuclear substrates such as histone and protamine. This is Neutral protease 2 homolog MGG_10927 from Colletotrichum graminicola (strain M1.001 / M2 / FGSC 10212) (Maize anthracnose fungus).